Consider the following 1022-residue polypeptide: GPI ethanolamine phosphate transferase 1 (1022 aa).

At M1–R6 the chain is on the cytoplasmic side. A helical membrane pass occupies residues V7–I27. At Y28 to R466 the chain is on the lumenal side. 2 N-linked (GlcNAc...) asparagine glycosylation sites follow: N148 and N433. The chain crosses the membrane as a helical span at residues T467–L487. Over H488–R498 the chain is Cytoplasmic. The helical transmembrane segment at T499–Y519 threads the bilayer. The Lumenal portion of the chain corresponds to Q520–S560. Residues V561–L581 traverse the membrane as a helical segment. The Cytoplasmic portion of the chain corresponds to V582 to D589. A helical transmembrane segment spans residues I590 to L610. At G611–K614 the chain is on the lumenal side. Residues L615–A635 form a helical membrane-spanning segment. The Cytoplasmic segment spans residues N636–D640. Residues M641–F661 traverse the membrane as a helical segment. The Lumenal segment spans residues E662 to T685. Residues I686–A706 traverse the membrane as a helical segment. Topologically, residues S707–G713 are cytoplasmic. The chain crosses the membrane as a helical span at residues L714–F734. Residues L735–M749 lie on the Lumenal side of the membrane. A run of 2 helical transmembrane segments spans residues V750–F770 and Y771–H791. The Lumenal segment spans residues T792 to R837. The N-linked (GlcNAc...) asparagine glycan is linked to N805. The helical transmembrane segment at V838–S858 threads the bilayer. Residues V859 to G880 lie on the Cytoplasmic side of the membrane. The chain crosses the membrane as a helical span at residues A881 to L901. At N902–S910 the chain is on the lumenal side. A helical transmembrane segment spans residues A911–V931. At R932–F947 the chain is on the cytoplasmic side. A helical transmembrane segment spans residues C948–I968. Over S969–S1022 the chain is Lumenal. A glycan (N-linked (GlcNAc...) asparagine) is linked at N989. Residues P998–S1022 form a disordered region.

This sequence belongs to the PIGG/PIGN/PIGO family. PIGN subfamily.

Its subcellular location is the endoplasmic reticulum membrane. It functions in the pathway glycolipid biosynthesis; glycosylphosphatidylinositol-anchor biosynthesis. Its function is as follows. Ethanolamine phosphate transferase involved in glycosylphosphatidylinositol-anchor biosynthesis. Transfers ethanolamine phosphate to the first alpha-1,4-linked mannose of the glycosylphosphatidylinositol precursor of GPI-anchor. This Aspergillus oryzae (strain ATCC 42149 / RIB 40) (Yellow koji mold) protein is GPI ethanolamine phosphate transferase 1 (mcd4).